We begin with the raw amino-acid sequence, 389 residues long: Arrestin-C (389 aa).

Belongs to the arrestin family. In terms of tissue distribution, retina and pineal gland.

Functionally, may play a role in an as yet undefined retina-specific signal transduction. Could bind to photoactivated-phosphorylated red/green opsins. This is Arrestin-C (arr3) from Lithobates pipiens (Northern leopard frog).